A 161-amino-acid polypeptide reads, in one-letter code: Allophycocyanin alpha chain (161 aa).

Asn-71 bears the N4-methylasparagine mark. Cys-81 is a (2R,3E)-phycocyanobilin binding site.

The protein belongs to the phycobiliprotein family. As to quaternary structure, heterodimer of an alpha and a beta chain. In terms of processing, contains one covalently linked phycocyanobilin chromophore.

The protein localises to the plastid. It is found in the cyanelle thylakoid membrane. Light-harvesting photosynthetic bile pigment-protein from the phycobiliprotein complex. Allophycocyanin has a maximum absorption at approximately 650 nanometers. The protein is Allophycocyanin alpha chain (apcA) of Cyanophora paradoxa.